The primary structure comprises 158 residues: Interleukin-17A (158 aa).

The N-terminal stretch at 1–25 is a signal peptide; the sequence is MSPGRASSVSLMLLLLLSLAATVKA. The N-linked (GlcNAc...) asparagine glycan is linked to N71. Intrachain disulfides connect C97-C147 and C102-C149.

This sequence belongs to the IL-17 family. As to quaternary structure, homodimer. Forms complexes with IL17RA and IL17RC receptors with 2:1 binding stoichiometry: two receptor chains for one interleukin molecule. IL17A homodimer preferentially drives the formation of IL17RA-IL17RC heterodimeric receptor complex. IL17A homodimer adopts an asymmetrical ternary structure with one IL17RA molecule, allowing for high affinity interactions of one IL17A monomer with one IL17RA molecule (via D1 and D2 domains), while disfavoring binding of a second IL17RA molecule on the other IL17A monomer. Heterodimer with IL17F. IL17A-IL17F forms complexes with IL17RA-IL17RC, but with lower affinity when compared to IL17A homodimer. IL17RA and IL17RC chains cannot distinguish between IL17A and IL17F molecules, potentially enabling the formation of topologically distinct complexes. Expressed by Th17 cell lineage (at protein level). The expression pattern reflects the differentiation state, with IL17A-IL17F heterodimers produced at higher levels than IL17A-IL17A and IL17F-IL17F dimers in fully differentiated Th17 cells. Expressed in innate lymphoid cells (at protein level). Expressed in gamma-delta T cell subsets (at protein level). Expressed in iNKT cells (at protein level).

It is found in the secreted. Its function is as follows. Effector cytokine of innate and adaptive immune system involved in antimicrobial host defense and maintenance of tissue integrity. Signals via IL17RA-IL17RC heterodimeric receptor complex, triggering homotypic interaction of IL17RA and IL17RC chains with TRAF3IP2 adapter. This leads to downstream TRAF6-mediated activation of NF-kappa-B and MAPkinase pathways ultimately resulting in transcriptional activation of cytokines, chemokines, antimicrobial peptides and matrix metalloproteinases, with potential strong immune inflammation. Plays an important role in connecting T cell-mediated adaptive immunity and acute inflammatory response to destroy extracellular bacteria and fungi. As a signature effector cytokine of T-helper 17 cells (Th17), primarily induces neutrophil activation and recruitment at infection and inflammatory sites. In airway epithelium, mediates neutrophil chemotaxis via induction of CXCL1 and CXCL5 chemokines. In secondary lymphoid organs, contributes to germinal center formation by regulating the chemotactic response of B cells to CXCL12 and CXCL13, enhancing retention of B cells within the germinal centers, B cell somatic hypermutation rate and selection toward plasma cells. Effector cytokine of a subset of gamma-delta T cells that functions as part of an inflammatory circuit downstream IL1B, TLR2 and IL23A-IL12B to promote neutrophil recruitment for efficient bacterial clearance. Effector cytokine of innate immune cells including invariant natural killer cell (iNKT) and group 3 innate lymphoid cells that mediate initial neutrophilic inflammation. Involved in the maintenance of the integrity of epithelial barriers during homeostasis and pathogen infection. Upon acute injury, has a direct role in epithelial barrier formation by regulating OCLN localization and tight junction biogenesis. As part of the mucosal immune response induced by commensal bacteria, enhances host's ability to resist pathogenic bacterial and fungal infections by promoting neutrophil recruitment and antimicrobial peptides release. In synergy with IL17F, mediates the production of antimicrobial beta-defensins DEFB1, DEFB103A, and DEFB104A by mucosal epithelial cells, limiting the entry of microbes through the epithelial barriers. Involved in antiviral host defense through various mechanisms. Enhances immunity against West Nile virus by promoting T cell cytotoxicity. May play a beneficial role in influenza A virus (H5N1) infection by enhancing B cell recruitment and immune response in the lung. Contributes to influenza A virus (H1N1) clearance by driving the differentiation of B-1a B cells, providing for production of virus-specific IgM antibodies at first line of host defense. This Mus musculus (Mouse) protein is Interleukin-17A (Il17a).